Consider the following 1142-residue polypeptide: Serine/threonine-protein kinase GIN4 (1142 aa).

The Protein kinase domain maps to 19–289 (WKLGETLGLG…TRDILKHPLL (271 aa)). Residues 25–33 (LGLGSTGKV) and lysine 48 each bind ATP. Residue aspartate 156 is the Proton acceptor of the active site. Disordered stretches follow at residues 378–412 (KKRQ…SVTS) and 425–469 (ASSA…RNKR). Low complexity predominate over residues 382–395 (SISSVSVSPSKKVS). Serine 406 is subject to Phosphoserine. The span at 425-440 (ASSASSSNLTTPGSSK) shows a compositional bias: low complexity. Residues 441-452 (RLSKNFSSKKKL) are compositionally biased toward basic residues. Over residues 454-465 (TIVNQSSPTPAS) the composition is skewed to polar residues. Serine 465, serine 471, serine 617, serine 689, serine 719, serine 805, serine 807, and serine 883 each carry phosphoserine. The tract at residues 676-698 (DPGIMFSSPTEEVSPVEPKRTEN) is disordered. Threonine 884 is modified (phosphothreonine). The disordered stretch occupies residues 903-1031 (NEAKQTDNLH…NTAIGNGSFF (129 aa)). Basic and acidic residues-rich tracts occupy residues 923–937 (NELR…DQAH), 962–984 (KEEK…KVVD), and 996–1021 (KIRE…KQDK). Serine 930 carries the post-translational modification Phosphoserine.

Belongs to the protein kinase superfamily. CAMK Ser/Thr protein kinase family. NIM1 subfamily. In terms of assembly, component of the GIN4 complex composed of at least BNI5, CDC3, CDC10, CDC11, CDC12, GIN4, NAP1 and SHS1 which forms a ring at the bud neck.

Its subcellular location is the cytoplasm. It is found in the bud neck. The catalysed reaction is L-seryl-[protein] + ATP = O-phospho-L-seryl-[protein] + ADP + H(+). It catalyses the reaction L-threonyl-[protein] + ATP = O-phospho-L-threonyl-[protein] + ADP + H(+). In terms of biological role, serine/threonine-protein kinase which regulates the localization and the function of the septins during mitosis. Phosphorylates SHS1. The sequence is that of Serine/threonine-protein kinase GIN4 (GIN4) from Saccharomyces cerevisiae (strain ATCC 204508 / S288c) (Baker's yeast).